The chain runs to 433 residues: Protein translocase subunit SecY (433 aa).

The next 10 membrane-spanning stretches (helical) occupy residues 17–37 (IVFT…PIPG), 71–91 (IFAL…LMSV), 117–137 (LTVL…ESIV), 141–161 (GPVV…TLVV), 184–204 (LIIF…MFEL), 212–232 (PLIA…IIFF), 268–288 (GVIP…LANF), 310–330 (YILL…AIVF), 366–386 (LTVI…LLMN), and 388–408 (YVIS…VVLD).

This sequence belongs to the SecY/SEC61-alpha family. As to quaternary structure, component of the Sec protein translocase complex. Heterotrimer consisting of SecY, SecE and SecG subunits. The heterotrimers can form oligomers, although 1 heterotrimer is thought to be able to translocate proteins. Interacts with the ribosome. Interacts with SecDF, and other proteins may be involved. Interacts with SecA.

It localises to the cell inner membrane. Its function is as follows. The central subunit of the protein translocation channel SecYEG. Consists of two halves formed by TMs 1-5 and 6-10. These two domains form a lateral gate at the front which open onto the bilayer between TMs 2 and 7, and are clamped together by SecE at the back. The channel is closed by both a pore ring composed of hydrophobic SecY resides and a short helix (helix 2A) on the extracellular side of the membrane which forms a plug. The plug probably moves laterally to allow the channel to open. The ring and the pore may move independently. The sequence is that of Protein translocase subunit SecY from Rickettsia conorii (strain ATCC VR-613 / Malish 7).